The chain runs to 288 residues: UDP-3-O-acyl-N-acetylglucosamine deacetylase (288 aa).

Residues His-79, His-236, and Asp-240 each contribute to the Zn(2+) site. His-263 (proton donor) is an active-site residue.

Belongs to the LpxC family. Zn(2+) is required as a cofactor.

The catalysed reaction is a UDP-3-O-[(3R)-3-hydroxyacyl]-N-acetyl-alpha-D-glucosamine + H2O = a UDP-3-O-[(3R)-3-hydroxyacyl]-alpha-D-glucosamine + acetate. It participates in glycolipid biosynthesis; lipid IV(A) biosynthesis; lipid IV(A) from (3R)-3-hydroxytetradecanoyl-[acyl-carrier-protein] and UDP-N-acetyl-alpha-D-glucosamine: step 2/6. Catalyzes the hydrolysis of UDP-3-O-myristoyl-N-acetylglucosamine to form UDP-3-O-myristoylglucosamine and acetate, the committed step in lipid A biosynthesis. The polypeptide is UDP-3-O-acyl-N-acetylglucosamine deacetylase (Rickettsia felis (strain ATCC VR-1525 / URRWXCal2) (Rickettsia azadi)).